The sequence spans 128 residues: Translation initiation factor 5A (128 aa).

A Hypusine modification is found at K35.

Belongs to the eIF-5A family.

The protein localises to the cytoplasm. Functionally, functions by promoting the formation of the first peptide bond. In Archaeoglobus fulgidus (strain ATCC 49558 / DSM 4304 / JCM 9628 / NBRC 100126 / VC-16), this protein is Translation initiation factor 5A (eif5a).